The sequence spans 467 residues: 6-phosphogluconate dehydrogenase, decarboxylating (467 aa).

NADP(+)-binding positions include 9–14 (GLGVMG), 32–34 (NYT), 73–75 (VTA), and Asn101. Substrate contacts are provided by residues Asn101 and 127–129 (SGG). The active-site Proton acceptor is Lys181. 184 to 185 (HN) is a binding site for substrate. The active-site Proton donor is Glu188. Substrate contacts are provided by Tyr189, Lys259, Arg286, and His451.

It belongs to the 6-phosphogluconate dehydrogenase family. In terms of assembly, homodimer.

The enzyme catalyses 6-phospho-D-gluconate + NADP(+) = D-ribulose 5-phosphate + CO2 + NADPH. It participates in carbohydrate degradation; pentose phosphate pathway; D-ribulose 5-phosphate from D-glucose 6-phosphate (oxidative stage): step 3/3. Its function is as follows. Catalyzes the oxidative decarboxylation of 6-phosphogluconate to ribulose 5-phosphate and CO(2), with concomitant reduction of NADP to NADPH. This chain is 6-phosphogluconate dehydrogenase, decarboxylating (gntZ), found in Bacillus licheniformis.